The sequence spans 231 residues: Urease subunit gamma/beta (231 aa).

A urease gamma region spans residues 1–101 (MLLTPTELER…LVTVHQPIRP (101 aa)). The tract at residues 102–231 (GQLPLAVMPT…RARAQFFKGA (130 aa)) is urease beta.

The protein in the N-terminal section; belongs to the urease gamma subunit family. This sequence in the C-terminal section; belongs to the urease beta subunit family. As to quaternary structure, heterohexamer of 3 UreC (alpha) and 3 UreAB (gamma/beta) subunits.

It is found in the cytoplasm. The enzyme catalyses urea + 2 H2O + H(+) = hydrogencarbonate + 2 NH4(+). It functions in the pathway nitrogen metabolism; urea degradation; CO(2) and NH(3) from urea (urease route): step 1/1. The chain is Urease subunit gamma/beta from Pseudomonas syringae pv. syringae (strain B728a).